Here is a 152-residue protein sequence, read N- to C-terminus: MPGKGDAPVLPGARAVARYVRISPMKARRVVNLVRGLPAKEALTVLQFAPQAASEQVYKVLASAIANAENNERLDPDALLVSEAYVDEGPTMKRFQPRAQGRAYRIRKRTCHITVVVEAVAPAAPTKAASKKAAPAKQTTPAATESKTEGAE.

Low complexity predominate over residues 124–143 (APTKAASKKAAPAKQTTPAA). The segment at 124 to 152 (APTKAASKKAAPAKQTTPAATESKTEGAE) is disordered.

Belongs to the universal ribosomal protein uL22 family. Part of the 50S ribosomal subunit.

Its function is as follows. This protein binds specifically to 23S rRNA; its binding is stimulated by other ribosomal proteins, e.g. L4, L17, and L20. It is important during the early stages of 50S assembly. It makes multiple contacts with different domains of the 23S rRNA in the assembled 50S subunit and ribosome. The globular domain of the protein is located near the polypeptide exit tunnel on the outside of the subunit, while an extended beta-hairpin is found that lines the wall of the exit tunnel in the center of the 70S ribosome. This is Large ribosomal subunit protein uL22 from Salinispora arenicola (strain CNS-205).